The primary structure comprises 494 residues: Guanosine-5'-triphosphate,3'-diphosphate pyrophosphatase (494 aa).

The protein belongs to the GppA/Ppx family. GppA subfamily.

It catalyses the reaction guanosine 3'-diphosphate 5'-triphosphate + H2O = guanosine 3',5'-bis(diphosphate) + phosphate + H(+). It participates in purine metabolism; ppGpp biosynthesis; ppGpp from GTP: step 2/2. In terms of biological role, catalyzes the conversion of pppGpp to ppGpp. Guanosine pentaphosphate (pppGpp) is a cytoplasmic signaling molecule which together with ppGpp controls the 'stringent response', an adaptive process that allows bacteria to respond to amino acid starvation, resulting in the coordinated regulation of numerous cellular activities. This Escherichia coli O127:H6 (strain E2348/69 / EPEC) protein is Guanosine-5'-triphosphate,3'-diphosphate pyrophosphatase.